Here is a 397-residue protein sequence, read N- to C-terminus: ATP-dependent RNA helicase eIF4A (397 aa).

The Q motif motif lies at 23-51 (YKFDDLNLKPNIVRGIFGYGYETPSAIQQ). A Helicase ATP-binding domain is found at 54-224 (ILPITEGRDV…TKFMNNPVRI (171 aa)). 67–74 (AQSGTGKT) is an ATP binding site. Positions 172–175 (DEAD) match the DEAD box motif. Positions 255-396 (DLYDSISVTQ…EMPADIGSLF (142 aa)) constitute a Helicase C-terminal domain.

The protein belongs to the DEAD box helicase family. eIF4A subfamily. As to quaternary structure, component of the eIF4F complex, which composition varies with external and internal environmental conditions. It is composed of at least eIF4A, eIF4E and eIF4G.

Its subcellular location is the cytoplasm. The enzyme catalyses ATP + H2O = ADP + phosphate + H(+). Functionally, ATP-dependent RNA helicase which is a subunit of the eIF4F complex involved in cap recognition and is required for mRNA binding to ribosome. In the current model of translation initiation, eIF4A unwinds RNA secondary structures in the 5'-UTR of mRNAs which is necessary to allow efficient binding of the small ribosomal subunit, and subsequent scanning for the initiator codon. The sequence is that of ATP-dependent RNA helicase eIF4A (TIF1) from Lodderomyces elongisporus (strain ATCC 11503 / CBS 2605 / JCM 1781 / NBRC 1676 / NRRL YB-4239) (Yeast).